The sequence spans 153 residues: Putative transcription factor YdeB (153 aa).

Belongs to the CarD family.

This is Putative transcription factor YdeB (ydeB) from Bacillus subtilis (strain 168).